The sequence spans 185 residues: A-type ATP synthase subunit E (185 aa).

This sequence belongs to the V-ATPase E subunit family. Has multiple subunits with at least A(3), B(3), C, D, E, F, H, I and proteolipid K(x).

It localises to the cell membrane. Its function is as follows. Component of the A-type ATP synthase that produces ATP from ADP in the presence of a proton gradient across the membrane. In Thermoplasma volcanium (strain ATCC 51530 / DSM 4299 / JCM 9571 / NBRC 15438 / GSS1), this protein is A-type ATP synthase subunit E.